The following is a 209-amino-acid chain: Large ribosomal subunit protein uL3 (209 aa).

Belongs to the universal ribosomal protein uL3 family. Part of the 50S ribosomal subunit. Forms a cluster with proteins L14 and L19.

Its function is as follows. One of the primary rRNA binding proteins, it binds directly near the 3'-end of the 23S rRNA, where it nucleates assembly of the 50S subunit. This Lactiplantibacillus plantarum (strain ATCC BAA-793 / NCIMB 8826 / WCFS1) (Lactobacillus plantarum) protein is Large ribosomal subunit protein uL3.